Reading from the N-terminus, the 603-residue chain is Alpha-1,2-mannosyltransferase algn-9 (603 aa).

Residues 1–25 (MVTHRRKGGSGPPQKPPPRIVDRSS) are disordered. The Lumenal portion of the chain corresponds to 1–108 (MVTHRRKGGS…EYSPVYAIRS (108 aa)). Residues 109 to 129 (YFYIYLHYIPASLFANLFGDT) form a helical membrane-spanning segment. Lys-130 is a topological domain (cytoplasmic). A helical transmembrane segment spans residues 131 to 151 (IVVFTLIRLTIGLFCLLGEYY). At 152-166 (AFDAICKKINIATGR) the chain is on the lumenal side. The helical transmembrane segment at 167 to 187 (FFILFSIFSSGMFLASTAFVP) threads the bilayer. The Cytoplasmic segment spans residues 188-195 (SSFCMAIT). A helical transmembrane segment spans residues 196–216 (FYILGAYLNENWTAGIFCVAF). Over 217–218 (ST) the chain is Lumenal. Residues 219–239 (MVGWPFSAVLGLPIVADMLLL) form a helical membrane-spanning segment. Topologically, residues 240 to 245 (KGLRIR) are cytoplasmic. Residues 246-266 (FILTSLVIGLCIGGVQVITDS) traverse the membrane as a helical segment. Over 267-310 (HYFGKTVLAPLNIFLYNVVSGPGPSLYGEEPLSFYIKNLFNNWN) the chain is Lumenal. The helical transmembrane segment at 311–331 (IVIFAAPFGFPLSLAYFTKVW) threads the bilayer. Residues 332–343 (MSQDRNVALYQR) lie on the Cytoplasmic side of the membrane. Residues 344–364 (FAPIILLAVTTAAWLLIFGSQ) traverse the membrane as a helical segment. The Lumenal segment spans residues 365 to 370 (AHKEER). A helical transmembrane segment spans residues 371–391 (FLFPIYPFIAFFAALALDATN). Topologically, residues 392–397 (RLCLKK) are cytoplasmic. A helical transmembrane segment spans residues 398 to 418 (LGMDNILSILFILCFAILSAS). Residues 419-603 (RTYSIHNNYG…TCTLYRKSNL (185 aa)) are Lumenal-facing. Asn-443 carries N-linked (GlcNAc...) asparagine glycosylation.

Belongs to the glycosyltransferase 22 family.

The protein resides in the endoplasmic reticulum membrane. It catalyses the reaction an alpha-D-Man-(1-&gt;2)-alpha-D-Man-(1-&gt;2)-alpha-D-Man-(1-&gt;3)-[alpha-D-Man-(1-&gt;3)-alpha-D-Man-(1-&gt;6)]-beta-D-Man-(1-&gt;4)-beta-D-GlcNAc-(1-&gt;4)-alpha-D-GlcNAc-diphospho-di-trans,poly-cis-dolichol + a di-trans,poly-cis-dolichyl beta-D-mannosyl phosphate = an alpha-D-Man-(1-&gt;2)-alpha-D-Man-(1-&gt;2)-alpha-D-Man-(1-&gt;3)-[alpha-D-Man-(1-&gt;2)-alpha-D-Man-(1-&gt;3)-alpha-D-Man-(1-&gt;6)]-beta-D-Man-(1-&gt;4)-beta-D-GlcNAc-(1-&gt;4)-alpha-D-GlcNAc-diphospho-di-trans,poly-cis-dolichol + a di-trans,poly-cis-dolichyl phosphate + H(+). The enzyme catalyses an alpha-D-Man-(1-&gt;2)-alpha-D-Man-(1-&gt;2)-alpha-D-Man-(1-&gt;3)-[alpha-D-Man-(1-&gt;2)-alpha-D-Man-(1-&gt;3)-[alpha-D-Man-(1-&gt;6)]-alpha-D-Man-(1-&gt;6)]-beta-D-Man-(1-&gt;4)-beta-D-GlcNAc-(1-&gt;4)-alpha-D-GlcNAc-diphospho-di-trans,poly-cis-dolichol + a di-trans,poly-cis-dolichyl beta-D-mannosyl phosphate = an alpha-D-Man-(1-&gt;2)-alpha-D-Man-(1-&gt;2)-alpha-D-Man-(1-&gt;3)-[alpha-D-Man-(1-&gt;2)-alpha-D-Man-(1-&gt;3)-[alpha-D-Man-(1-&gt;2)-alpha-D-Man-(1-&gt;6)]-alpha-D-Man-(1-&gt;6)]-beta-D-Man-(1-&gt;4)-beta-D-GlcNAc-(1-&gt;4)-alpha-D-GlcNAc-diphospho-di-trans,poly-cis-dolichol + a di-trans,poly-cis-dolichyl phosphate + H(+). Its pathway is protein modification; protein glycosylation. In terms of biological role, catalyzes the transfer of mannose from Dol-P-Man to lipid-linked oligosaccharides. This is Alpha-1,2-mannosyltransferase algn-9 from Caenorhabditis elegans.